Here is a 472-residue protein sequence, read N- to C-terminus: Argininosuccinate lyase (472 aa).

The protein belongs to the lyase 1 family. Argininosuccinate lyase subfamily.

The protein resides in the cytoplasm. It carries out the reaction 2-(N(omega)-L-arginino)succinate = fumarate + L-arginine. Its pathway is amino-acid biosynthesis; L-arginine biosynthesis; L-arginine from L-ornithine and carbamoyl phosphate: step 3/3. This is Argininosuccinate lyase from Mycolicibacterium paratuberculosis (strain ATCC BAA-968 / K-10) (Mycobacterium paratuberculosis).